Here is a 283-residue protein sequence, read N- to C-terminus: Protease HtpX (283 aa).

Helical transmembrane passes span 4–24 (ILLF…ILNV) and 33–53 (GGIL…SLFL). Residue His139 coordinates Zn(2+). Residue Glu140 is part of the active site. His143 contacts Zn(2+). 2 consecutive transmembrane segments (helical) span residues 147–167 (GDMV…IFLS) and 190–210 (IYFL…SIIA). Residue Glu218 participates in Zn(2+) binding.

It belongs to the peptidase M48B family. Zn(2+) serves as cofactor.

The protein resides in the cell inner membrane. The chain is Protease HtpX from Haemophilus influenzae (strain 86-028NP).